The chain runs to 247 residues: MRRLIAANWKMNKTVKETEEYINTFLKFVEHPESREILICPPFTSLYVAGKMLQGTGVKLGAQNCHYEKRGAFTGEISIPMLQEVGCEYVIVGHSERRHIFGESDELIHKKIVACLEMGIRPILCVGEKKEEREAGMTFKVIETQIKLALTGVEEHTDKIDIAYEPVWAIGTGTPATPEDAVEVHTFIRNLINQLNPKNEGKTRILYGGSVNPQNAKEFMKHEEINGLLVGTASLDPESFAKIVYSF.

8 to 10 (NWK) is a substrate binding site. His94 functions as the Electrophile in the catalytic mechanism. Residue Glu165 is the Proton acceptor of the active site. Positions 171 and 210 each coordinate substrate.

It belongs to the triosephosphate isomerase family. As to quaternary structure, homodimer.

The protein localises to the cytoplasm. The catalysed reaction is D-glyceraldehyde 3-phosphate = dihydroxyacetone phosphate. It functions in the pathway carbohydrate biosynthesis; gluconeogenesis. The protein operates within carbohydrate degradation; glycolysis; D-glyceraldehyde 3-phosphate from glycerone phosphate: step 1/1. Its function is as follows. Involved in the gluconeogenesis. Catalyzes stereospecifically the conversion of dihydroxyacetone phosphate (DHAP) to D-glyceraldehyde-3-phosphate (G3P). In Aquifex aeolicus (strain VF5), this protein is Triosephosphate isomerase.